The sequence spans 121 residues: Basic phospholipase A2 homolog AppP2 (121 aa).

Intrachain disulfides connect Cys-26-Cys-115, Cys-28-Cys-44, Cys-43-Cys-95, Cys-49-Cys-121, Cys-50-Cys-88, Cys-57-Cys-81, and Cys-75-Cys-86. An important for membrane-damaging activities in eukaryotes and bacteria; heparin-binding region spans residues 105 to 117; it reads KKYKAYFKLKCKK.

The protein belongs to the phospholipase A2 family. Group II subfamily. K49 sub-subfamily. As to quaternary structure, monomer. As to expression, expressed by the venom gland.

It is found in the secreted. Functionally, snake venom phospholipase A2 (PLA2) that lacks enzymatic activity. Displays edema-inducing activities. Is myotoxic. A model of myotoxic mechanism has been proposed: an apo Lys49-PLA2 is activated by the entrance of a hydrophobic molecule (e.g. fatty acid) at the hydrophobic channel of the protein leading to a reorientation of a monomer. This reorientation causes a transition between 'inactive' to 'active' states, causing alignment of C-terminal and membrane-docking sites (MDoS) side-by-side and putting the membrane-disruption sites (MDiS) in the same plane, exposed to solvent and in a symmetric position for both monomers. The MDoS region stabilizes the toxin on membrane by the interaction of charged residues with phospholipid head groups. Subsequently, the MDiS region destabilizes the membrane with penetration of hydrophobic residues. This insertion causes a disorganization of the membrane, allowing an uncontrolled influx of ions (i.e. calcium and sodium), and eventually triggering irreversible intracellular alterations and cell death. The protein is Basic phospholipase A2 homolog AppP2 of Agkistrodon piscivorus piscivorus (Eastern cottonmouth).